A 63-amino-acid polypeptide reads, in one-letter code: MADAKTIKIEQIGSPIRRHRSQRSTLIGLKLNKIGRVTELPDTPAVRGMITKVHHLVRIVDEK.

It belongs to the universal ribosomal protein uL30 family. Part of the 50S ribosomal subunit.

The polypeptide is Large ribosomal subunit protein uL30 (Bradyrhizobium sp. (strain ORS 278)).